The following is a 73-amino-acid chain: MAKEELVEFGGKVSEVLPDNRFRVTLENGFEVWAYSSGRLKRNRIRILAGDRVTLEMSPYDLTKGRINYRHKF.

The region spanning methionine 1 to lysine 72 is the S1-like domain.

This sequence belongs to the IF-1 family. Component of the 30S ribosomal translation pre-initiation complex which assembles on the 30S ribosome in the order IF-2 and IF-3, IF-1 and N-formylmethionyl-tRNA(fMet); mRNA recruitment can occur at any time during PIC assembly.

Its subcellular location is the cytoplasm. In terms of biological role, one of the essential components for the initiation of protein synthesis. Stabilizes the binding of IF-2 and IF-3 on the 30S subunit to which N-formylmethionyl-tRNA(fMet) subsequently binds. Helps modulate mRNA selection, yielding the 30S pre-initiation complex (PIC). Upon addition of the 50S ribosomal subunit IF-1, IF-2 and IF-3 are released leaving the mature 70S translation initiation complex. In Cupriavidus pinatubonensis (strain JMP 134 / LMG 1197) (Cupriavidus necator (strain JMP 134)), this protein is Translation initiation factor IF-1 2.